The primary structure comprises 491 residues: Protein ICE2 (491 aa).

Residues 1–13 (MTSLSKSFMQSGR) lie on the Cytoplasmic side of the membrane. The chain crosses the membrane as a helical span at residues 14-34 (ICAACFYLLFTLLSIPISFKV). Topologically, residues 35–40 (GGLECG) are lumenal. Residues 41–61 (LSFTVTLFTLYFITTTLNVLA) traverse the membrane as a helical segment. Over 62 to 74 (RRHGGRLYIFFTN) the chain is Cytoplasmic. Residues 75–95 (CLYYSQHFIIASLLYLFLSGF) traverse the membrane as a helical segment. Residues 96-149 (SNDELGNVLKNKYNESESFLEALKNSLNSNQINYVLYYYYYRFVVQPWQFVLTK) are Lumenal-facing. The helical transmembrane segment at 150-170 (STPFFTLSEGFFTILAIQAVG) threads the bilayer. The Cytoplasmic segment spans residues 171-184 (ETNRWLSNDLNSNT). The helical transmembrane segment at 185-205 (WIISSLLTSGGVITASLYYLY) threads the bilayer. Topologically, residues 206–218 (RIYVTPIWPLSIQ) are lumenal. The chain crosses the membrane as a helical span at residues 219–239 (TASLLGLVLSMVCGLGLYGIV). Topologically, residues 240–294 (SQKGSVIESSLFFAYIVRCIYEISPKLATTATDEILNLFKDVWQKHQRNLPTADN) are cytoplasmic. The chain crosses the membrane as a helical span at residues 295–315 (LLCYFHNVILKNAEVLWGSFI). At 316-373 (PRGRKKTGDFHDKLISILSFEKVSLISKPFWKFFKNFTFSVPLSINEFCQVTIKMASE) the chain is on the lumenal side. The chain crosses the membrane as a helical span at residues 374–394 (SVSPAIVINLCFRVLMFYSAT). Residues 395–413 (RIIPALQRKNDKQLRKSRR) are Cytoplasmic-facing. A helical membrane pass occupies residues 414 to 434 (IMKGLYWYSPCILIAMYTHLI). Residues 435 to 461 (LQYSGELKKDLCIWGCSEKWFGVDQPE) are Lumenal-facing. A helical membrane pass occupies residues 462-482 (IIVDSWGFWNWCNIFCTILVY). Residues 483 to 491 (ATELIGSGS) lie on the Cytoplasmic side of the membrane.

It localises to the endoplasmic reticulum membrane. The polypeptide is Protein ICE2 (ICE2) (Saccharomyces cerevisiae (strain ATCC 204508 / S288c) (Baker's yeast)).